The chain runs to 242 residues: Uridylate kinase (242 aa).

15-18 contacts ATP; the sequence is KLSG. A UMP-binding site is contributed by Gly57. Gly58 and Arg62 together coordinate ATP. UMP is bound by residues Asp78 and 139 to 146; that span reads TGNPFFTT. ATP is bound by residues Thr166, Tyr172, and Asp175.

The protein belongs to the UMP kinase family. In terms of assembly, homohexamer.

Its subcellular location is the cytoplasm. It catalyses the reaction UMP + ATP = UDP + ADP. It participates in pyrimidine metabolism; CTP biosynthesis via de novo pathway; UDP from UMP (UMPK route): step 1/1. With respect to regulation, inhibited by UTP. Catalyzes the reversible phosphorylation of UMP to UDP. In Acinetobacter baumannii (strain ATCC 17978 / DSM 105126 / CIP 53.77 / LMG 1025 / NCDC KC755 / 5377), this protein is Uridylate kinase.